The primary structure comprises 117 residues: Large ribosomal subunit protein bL17 (117 aa).

The protein belongs to the bacterial ribosomal protein bL17 family. In terms of assembly, part of the 50S ribosomal subunit. Contacts protein L32.

This is Large ribosomal subunit protein bL17 from Neorickettsia sennetsu (strain ATCC VR-367 / Miyayama) (Ehrlichia sennetsu).